We begin with the raw amino-acid sequence, 237 residues long: 1-(5-phosphoribosyl)-5-[(5-phosphoribosylamino)methylideneamino] imidazole-4-carboxamide isomerase (237 aa).

The active-site Proton acceptor is the aspartate 8. Aspartate 130 functions as the Proton donor in the catalytic mechanism.

This sequence belongs to the HisA/HisF family.

Its subcellular location is the cytoplasm. It carries out the reaction 1-(5-phospho-beta-D-ribosyl)-5-[(5-phospho-beta-D-ribosylamino)methylideneamino]imidazole-4-carboxamide = 5-[(5-phospho-1-deoxy-D-ribulos-1-ylimino)methylamino]-1-(5-phospho-beta-D-ribosyl)imidazole-4-carboxamide. It functions in the pathway amino-acid biosynthesis; L-histidine biosynthesis; L-histidine from 5-phospho-alpha-D-ribose 1-diphosphate: step 4/9. The sequence is that of 1-(5-phosphoribosyl)-5-[(5-phosphoribosylamino)methylideneamino] imidazole-4-carboxamide isomerase from Caldicellulosiruptor saccharolyticus (strain ATCC 43494 / DSM 8903 / Tp8T 6331).